Reading from the N-terminus, the 60-residue chain is UPF0434 protein PC1_1771 (60 aa).

Belongs to the UPF0434 family.

The polypeptide is UPF0434 protein PC1_1771 (Pectobacterium carotovorum subsp. carotovorum (strain PC1)).